Here is a 507-residue protein sequence, read N- to C-terminus: MISAGEVLKVIKERIENFDGQVKCESVGEVISVKDGIALVYGLEKAKFGEVVAFANGTIGVVLNLDCDTVSIVIFGSENSVGEGDIVKCTNQLMDVPVGLELLGRVVDALGNPIDGLENFDTKTRLPVEIKAPGIIDRQSVTEPLQTGIKVIDMLIPIGRGQRELIIGDRKTGKTAIAIDTIINQKSHNNEVIDKEKVYCIYVAIGQKNSSVARIINKLRESGALEYTIVVVAGASDSASLQYLAPYTACAMGEFFRDNGMHCLIVYDDLSKHAAAYRQMSLLLRRPPGREAYPGDVFFLHSRLLERAAKMSDKKGGGSLTALPIIETQAGDVSAYVPTNVISITDGQIFLESEIFYKGLRPAVNVGLSVSRVGSSAQIKSVKKVAGSIKLSLAQYRELEDFAKFGSDVDVHSQKILDRGRRMMELLKQKQYSPLSVGEQVAVIFAGTSGYLDDISVNDISKFEERLLSELNSNYPDILSSISNNNFTDDIRSLLSKVISKIASSLK.

168-175 (GDRKTGKT) contacts ATP.

This sequence belongs to the ATPase alpha/beta chains family. In terms of assembly, F-type ATPases have 2 components, CF(1) - the catalytic core - and CF(0) - the membrane proton channel. CF(1) has five subunits: alpha(3), beta(3), gamma(1), delta(1), epsilon(1). CF(0) has three main subunits: a(1), b(2) and c(9-12). The alpha and beta chains form an alternating ring which encloses part of the gamma chain. CF(1) is attached to CF(0) by a central stalk formed by the gamma and epsilon chains, while a peripheral stalk is formed by the delta and b chains.

Its subcellular location is the cell inner membrane. The enzyme catalyses ATP + H2O + 4 H(+)(in) = ADP + phosphate + 5 H(+)(out). Its function is as follows. Produces ATP from ADP in the presence of a proton gradient across the membrane. The alpha chain is a regulatory subunit. This is ATP synthase subunit alpha from Ehrlichia ruminantium (strain Gardel).